The sequence spans 523 residues: Maintenance of mitochondrial morphology protein 1 (523 aa).

The Lumenal portion of the chain corresponds to 1–43; it reads MAGSTSASLQTPYFPSSTQINPVRVDHTLPLPPAQPSLSFTQG. Residues 44–64 traverse the membrane as a helical segment; that stretch reads LLVGQLSVVLLIGAFIKFFIF. Residues 65 to 523 are Cytoplasmic-facing; sequence GEAPPPPSRG…GSMPDTVTET (459 aa). Disordered stretches follow at residues 70–118, 295–349, 420–473, and 492–523; these read PPSR…SSST, TSDQ…SKHG, RTGL…IDRG, and GGHQ…VTET. 3 stretches are compositionally biased toward polar residues: residues 74 to 96, 105 to 118, and 295 to 312; these read GLSN…TDSS, STSN…SSST, and TSDQ…TTSE. In terms of domain architecture, SMP-LTD spans 151–412; it reads QPESLDWFNV…EPRVQVVGLP (262 aa). The segment covering 449–467 has biased composition (gly residues); it reads GVSGGGGSGGGSGGGGGSM.

It belongs to the MMM1 family. Homodimer. Component of the ER-mitochondria encounter structure (ERMES) or MDM complex, composed of MMM1, MDM10, MDM12 and MDM34. An MMM1 homodimer associates with one molecule of MDM12 on each side in a pairwise head-to-tail manner, and the SMP-LTD domains of MMM1 and MDM12 generate a continuous hydrophobic tunnel for phospholipid trafficking.

It localises to the endoplasmic reticulum membrane. Functionally, component of the ERMES/MDM complex, which serves as a molecular tether to connect the endoplasmic reticulum (ER) and mitochondria. Components of this complex are involved in the control of mitochondrial shape and protein biogenesis, and function in nonvesicular lipid trafficking between the ER and mitochondria. The MDM12-MMM1 subcomplex functions in the major beta-barrel assembly pathway that is responsible for biogenesis of all outer membrane beta-barrel proteins, and acts in a late step after the SAM complex. The MDM10-MDM12-MMM1 subcomplex further acts in the TOM40-specific pathway after the action of the MDM12-MMM1 complex. Essential for establishing and maintaining the structure of mitochondria and maintenance of mtDNA nucleoids. This Paracoccidioides brasiliensis (strain Pb03) protein is Maintenance of mitochondrial morphology protein 1.